The following is a 669-amino-acid chain: Zinc finger MYM-type protein 5 (669 aa).

Glycyl lysine isopeptide (Lys-Gly) (interchain with G-Cter in SUMO2) cross-links involve residues Lys-88, Lys-91, Lys-134, Lys-149, Lys-166, and Lys-225. 4 MYM-type zinc fingers span residues 265 to 299, 311 to 351, 358 to 393, and 404 to 431; these read HLFC…KKAN, QEFY…RHEV, HKLC…KSTG, and KRFC…ASEN. Residues Lys-443, Lys-455, Lys-462, and Lys-552 each participate in a glycyl lysine isopeptide (Lys-Gly) (interchain with G-Cter in SUMO2) cross-link.

Interacts (via N-terminal 120 amino acid region) with ETV5 (via C-terminal).

The protein resides in the nucleus. In terms of biological role, functions as a transcriptional regulator. The sequence is that of Zinc finger MYM-type protein 5 (ZMYM5) from Homo sapiens (Human).